We begin with the raw amino-acid sequence, 389 residues long: Endonuclease 8-like 1 (389 aa).

The active-site Schiff-base intermediate with DNA is the proline 2. Glutamate 3 acts as the Proton donor in catalysis. Lysine 54 acts as the Proton donor; for beta-elimination activity in catalysis. Residue asparagine 176 participates in DNA binding. The disordered stretch occupies residues 278-389 (TIWFQGDPGP…PREAGESSAS (112 aa)). Basic residues predominate over residues 322–333 (SRMRRARKHPPK). Residues 336-351 (AQQSEGAGLQQNQETP) are compositionally biased toward polar residues. Basic residues predominate over residues 357–373 (GKRRGQRASTGHRRRPK). Over residues 374-389 (TIPDTRPREAGESSAS) the composition is skewed to basic and acidic residues.

The protein belongs to the FPG family. As to expression, detected in heart, spleen and lung.

The protein resides in the cytoplasm. It is found in the cytoskeleton. It localises to the microtubule organizing center. Its subcellular location is the centrosome. The protein localises to the nucleus. The protein resides in the chromosome. The catalysed reaction is 2'-deoxyribonucleotide-(2'-deoxyribose 5'-phosphate)-2'-deoxyribonucleotide-DNA = a 3'-end 2'-deoxyribonucleotide-(2,3-dehydro-2,3-deoxyribose 5'-phosphate)-DNA + a 5'-end 5'-phospho-2'-deoxyribonucleoside-DNA + H(+). Its function is as follows. Involved in base excision repair of DNA damaged by oxidation or by mutagenic agents. Acts as a DNA glycosylase that recognizes and removes damaged bases. Has a preference for oxidized pyrimidines, such as thymine glycol, formamidopyrimidine (Fapy) and 5-hydroxyuracil. Has marginal activity towards 8-oxoguanine. Has AP (apurinic/apyrimidinic) lyase activity and introduces nicks in the DNA strand. Cleaves the DNA backbone by beta-delta elimination to generate a single-strand break at the site of the removed base with both 3'- and 5'-phosphates. Has DNA glycosylase/lyase activity towards mismatched uracil and thymine, in particular in U:C and T:C mismatches. Specifically binds 5-hydroxymethylcytosine (5hmC), suggesting that it acts as a specific reader of 5hmC. This chain is Endonuclease 8-like 1 (Neil1), found in Mus musculus (Mouse).